We begin with the raw amino-acid sequence, 151 residues long: Calmodulin (151 aa).

4 consecutive EF-hand domains span residues 10-45, 46-81, 83-118, and 119-151; these read EQIS…LGQN, PTEA…KMKD, DSEE…LGEK, and LTDE…MLSK. Ca(2+) contacts are provided by Asp-23, Asp-25, Asp-27, Ser-29, Glu-34, Asp-59, Asp-61, Asn-63, Thr-65, Glu-70, Asp-96, Asp-98, Asn-100, Glu-107, Asp-132, Asp-134, Asp-136, and Glu-143.

Belongs to the calmodulin family.

Calmodulin mediates the control of a large number of enzymes, ion channels and other proteins by Ca(2+). Among the enzymes to be stimulated by the calmodulin-Ca(2+) complex are a number of protein kinases and phosphatases. In Pneumocystis carinii, this protein is Calmodulin.